The sequence spans 249 residues: 3-deoxy-D-manno-octulosonic acid kinase (249 aa).

D175 is an active-site residue.

Belongs to the protein kinase superfamily. KdkA/RfaP family.

Its subcellular location is the cell inner membrane. It catalyses the reaction an alpha-Kdo-(2-&gt;6)-lipid IVA + ATP = a 4-O-phospho-alpha-Kdo-(2-&gt;6)-lipid IVA + ADP + H(+). The protein operates within bacterial outer membrane biogenesis; LPS core biosynthesis. Functionally, catalyzes the ATP-dependent phosphorylation of the 3-deoxy-D-manno-octulosonic acid (Kdo) residue in Kdo-lipid IV(A) at the 4-OH position. The polypeptide is 3-deoxy-D-manno-octulosonic acid kinase (Stenotrophomonas maltophilia (strain K279a)).